We begin with the raw amino-acid sequence, 270 residues long: Malonyl-[acyl-carrier protein] O-methyltransferase (270 aa).

It belongs to the methyltransferase superfamily.

The enzyme catalyses malonyl-[ACP] + S-adenosyl-L-methionine = malonyl-[ACP] methyl ester + S-adenosyl-L-homocysteine. Its pathway is cofactor biosynthesis; biotin biosynthesis. Converts the free carboxyl group of a malonyl-thioester to its methyl ester by transfer of a methyl group from S-adenosyl-L-methionine (SAM). It allows to synthesize pimeloyl-ACP via the fatty acid synthetic pathway. This Marinomonas sp. (strain MWYL1) protein is Malonyl-[acyl-carrier protein] O-methyltransferase.